A 406-amino-acid polypeptide reads, in one-letter code: MLNISKIFEEVKVMKNFTLNFGPQHPAAHGVLRLIVELESENVVRVEPHIGLLHRGTEKLIEGKTYTQALPYFDRLDYVSMNVQEHAYSLAVERLYLDSLDIELEIPQRAKVIRVLFSEITRVLNHIMATTTHAMDVGALTPFLWAFEEREKLMEFYERVSGARMHAAYIRPGGVAFDLPMNISEDIYKFVIQYRKRLEEIEDMLINNRIWKQRLVDIGIVSAEEALNYGFTGPLLRGAGIVYDIRKNYPYDDYDKYDFKIIIGEENNSYTRFIIRMKEMYQSLSIIEQALNNLRPGLIKLEGVNITAPDRAFVKKDMESCINHFKFFSEGFIIPANENYTIVEAPKGEFGIYLNANDTAKPYRCRIKAPGFLHLQGLNMMSKDHLLADVVTLIGTQDIVFGEVDR.

Belongs to the complex I 49 kDa subunit family. Complex I is composed of 45 different subunits. Component of the iron-sulfur (IP) fragment of the enzyme.

The protein localises to the mitochondrion inner membrane. It carries out the reaction a ubiquinone + NADH + 5 H(+)(in) = a ubiquinol + NAD(+) + 4 H(+)(out). Functionally, core subunit of the mitochondrial membrane respiratory chain NADH dehydrogenase (Complex I) that is believed to belong to the minimal assembly required for catalysis. Complex I functions in the transfer of electrons from NADH to the respiratory chain. The immediate electron acceptor for the enzyme is believed to be ubiquinone. The sequence is that of NADH-ubiquinone oxidoreductase 49 kDa subunit (nad7) from Dictyostelium discoideum (Social amoeba).